We begin with the raw amino-acid sequence, 377 residues long: Leukocyte elastase inhibitor (377 aa).

Met1 carries the N-acetylmethionine modification.

This sequence belongs to the serpin family. Ov-serpin subfamily.

Its subcellular location is the cytoplasm. In terms of biological role, regulates the activity of the neutrophil proteases. This Xenopus tropicalis (Western clawed frog) protein is Leukocyte elastase inhibitor (serpinb1).